The sequence spans 855 residues: Nuclear valosin-containing protein-like (855 aa).

The segment at 1 to 219 (MKPRPGVFVD…SLLESDKKRK (219 aa)) is interaction with RPL5. Residues 49-52 (RRKR) carry the Nucleolar localization signal motif. Residue Lys70 is modified to N6-acetyllysine. The interval 83–234 (LAKRARQDEE…KGNKRKTENL (152 aa)) is disordered. The Nuclear localization signal signature appears at 85 to 88 (KRAR). Residues 90 to 110 (DEEDEYTESYSDDDSNMEDYP) are compositionally biased toward acidic residues. 2 stretches are compositionally biased toward polar residues: residues 113-123 (QSANPMNSSLL) and 131-157 (SESVSTTPKWGQREATTSTPLLTSKTG). A Phosphoserine modification is found at Ser133. Thr137 carries the post-translational modification Phosphothreonine. The residue at position 155 (Lys155) is an N6-acetyllysine. Ser190 bears the Phosphoserine mark. Lys207 is covalently cross-linked (Glycyl lysine isopeptide (Lys-Gly) (interchain with G-Cter in SUMO2)). Residues Ser210 and Ser214 each carry the phosphoserine modification. Over residues 217–228 (KRKGRAKGKGNK) the composition is skewed to basic residues. A Nuclear localization signal motif is present at residues 217–231 (KRKGRAKGKGNKRKT). The interaction with WDR74 stretch occupies residues 266–473 (VGGNDATLKE…LTPGFVGADL (208 aa)). 304-311 (GPPGCGKT) lines the ATP pocket. The disordered stretch occupies residues 496–523 (QKKKPEIEGLPSEGDQEERLGAEPTSET). An ATP-binding site is contributed by 621–628 (GPPGCGKT).

It belongs to the AAA ATPase family. In terms of assembly, interacts with NCL/nucleolin. Isoform 1 and isoform 2 interact with TERT and isoform 1 exhibits a higher binding affinity for TERT compared to isoform 2. Isoform 1 interacts with MTREX in an ATP-dependent manner; the interaction is required to associate NVL with nuclear RNA exosome. Isoform 1 interacts with RPL5 in an ATP-dependent manner. Interacts with WDR74 (through WDR repeats); the interaction is independent of RNA or pre-60S ribosome particles.

It is found in the nucleus. Its subcellular location is the nucleolus. The protein localises to the nucleoplasm. Its function is as follows. Participates in the assembly of the telomerase holoenzyme and effecting of telomerase activity via its interaction with TERT. Involved in both early and late stages of the pre-rRNA processing pathways. Spatiotemporally regulates 60S ribosomal subunit biogenesis in the nucleolus. Catalyzes the release of specific assembly factors, such as WDR74, from pre-60S ribosomal particles through the ATPase activity. The polypeptide is Nuclear valosin-containing protein-like (Mus musculus (Mouse)).